The following is a 68-amino-acid chain: DNA-directed RNA polymerase subunit omega (68 aa).

It belongs to the RNA polymerase subunit omega family. In terms of assembly, the RNAP catalytic core consists of 2 alpha, 1 beta, 1 beta' and 1 omega subunit. When a sigma factor is associated with the core the holoenzyme is formed, which can initiate transcription.

The catalysed reaction is RNA(n) + a ribonucleoside 5'-triphosphate = RNA(n+1) + diphosphate. Its function is as follows. Promotes RNA polymerase assembly. Latches the N- and C-terminal regions of the beta' subunit thereby facilitating its interaction with the beta and alpha subunits. This is DNA-directed RNA polymerase subunit omega from Desulforapulum autotrophicum (strain ATCC 43914 / DSM 3382 / VKM B-1955 / HRM2) (Desulfobacterium autotrophicum).